Reading from the N-terminus, the 160-residue chain is Small ribosomal subunit protein uS7 (160 aa).

This sequence belongs to the universal ribosomal protein uS7 family. Part of the 30S ribosomal subunit. Contacts proteins S9 and S11.

In terms of biological role, one of the primary rRNA binding proteins, it binds directly to 16S rRNA where it nucleates assembly of the head domain of the 30S subunit. Is located at the subunit interface close to the decoding center, probably blocks exit of the E-site tRNA. This chain is Small ribosomal subunit protein uS7, found in Ehrlichia ruminantium (strain Gardel).